We begin with the raw amino-acid sequence, 394 residues long: HORMA domain-containing protein 1 (394 aa).

An HORMA domain is found at His24–Val226. The segment at Lys252–Ile394 is disordered. The segment covering Ile253 to Lys282 has biased composition (basic and acidic residues). Composition is skewed to polar residues over residues Leu310–Thr324 and Lys343–Lys352. Positions Gln362 to Asp374 are enriched in basic and acidic residues. Ser376 carries the phosphoserine modification. Positions Lys383–Lys386 match the Nuclear localization signal motif.

In terms of assembly, interacts with HORMAD2. Interacts with IHO1. In terms of processing, phosphorylated at Ser-377 in a SPO11-dependent manner.

The protein localises to the nucleus. The protein resides in the chromosome. Functionally, plays a key role in meiotic progression. Regulates 3 different functions during meiosis: ensures that sufficient numbers of processed DNA double-strand breaks (DSBs) are available for successful homology search by increasing the steady-state numbers of single-stranded DSB ends. Promotes synaptonemal-complex formation independently of its role in homology search. Plays a key role in the male mid-pachytene checkpoint and the female meiotic prophase checkpoint: required for efficient build-up of ATR activity on unsynapsed chromosome regions, a process believed to form the basis of meiotic silencing of unsynapsed chromatin (MSUC) and meiotic prophase quality control in both sexes. The chain is HORMA domain-containing protein 1 (HORMAD1) from Macaca fascicularis (Crab-eating macaque).